Consider the following 104-residue polypeptide: MAAKIRRDDEVIVLTGKDKGKRGKVKNVLSSGKVIVEGINLVKKHQKPVPALNQPGGIVEKEAAIQVSNVAIFNAATGKADRVGFRFEDGKKVRFFKSNSETIK.

Belongs to the universal ribosomal protein uL24 family. As to quaternary structure, part of the 50S ribosomal subunit.

Functionally, one of two assembly initiator proteins, it binds directly to the 5'-end of the 23S rRNA, where it nucleates assembly of the 50S subunit. One of the proteins that surrounds the polypeptide exit tunnel on the outside of the subunit. The polypeptide is Large ribosomal subunit protein uL24 (Cronobacter sakazakii (strain ATCC BAA-894) (Enterobacter sakazakii)).